The chain runs to 494 residues: Glycerol kinase (494 aa).

Residue threonine 12 participates in ADP binding. ATP is bound by residues threonine 12, threonine 13, and serine 14. Threonine 12 provides a ligand contact to sn-glycerol 3-phosphate. Arginine 16 is an ADP binding site. Residues arginine 82, glutamate 83, tyrosine 135, and aspartate 244 each coordinate sn-glycerol 3-phosphate. Glycerol-binding residues include arginine 82, glutamate 83, tyrosine 135, aspartate 244, and glutamine 245. The ADP site is built by threonine 266 and glycine 309. Threonine 266, glycine 309, glutamine 313, and glycine 409 together coordinate ATP. ADP is bound by residues glycine 409 and asparagine 413.

Belongs to the FGGY kinase family.

The catalysed reaction is glycerol + ATP = sn-glycerol 3-phosphate + ADP + H(+). It participates in polyol metabolism; glycerol degradation via glycerol kinase pathway; sn-glycerol 3-phosphate from glycerol: step 1/1. Inhibited by fructose 1,6-bisphosphate (FBP). Its function is as follows. Key enzyme in the regulation of glycerol uptake and metabolism. Catalyzes the phosphorylation of glycerol to yield sn-glycerol 3-phosphate. This is Glycerol kinase from Alteromonas mediterranea (strain DSM 17117 / CIP 110805 / LMG 28347 / Deep ecotype).